The sequence spans 64 residues: Conotoxin Pn-B01121 (64 aa).

Residues 1 to 22 (MCCLPVFVILLLLIASAPSVDA) form the signal peptide. Residues 23 to 48 (LPKTKDDMSLASFHDNAKRTLQILSN) constitute a propeptide that is removed on maturation. Trp-63 carries the tryptophan amide modification.

Belongs to the conotoxin T superfamily. Post-translationally, contains 2 disulfide bonds that can be either 'C1-C3, C2-C4' or 'C1-C4, C2-C3', since these disulfide connectivities have been observed for conotoxins with cysteine framework V (for examples, see AC P0DQQ7 and AC P81755). In terms of tissue distribution, expressed by the venom duct.

The protein resides in the secreted. This Conus pennaceus (Feathered cone) protein is Conotoxin Pn-B01121.